The sequence spans 154 residues: Putative nickel-responsive regulator (154 aa).

Residues H95, H106, H108, and C114 each contribute to the Ni(2+) site.

This sequence belongs to the transcriptional regulatory CopG/NikR family. The cofactor is Ni(2+).

In terms of biological role, transcriptional regulator. The chain is Putative nickel-responsive regulator from Caldanaerobacter subterraneus subsp. tengcongensis (strain DSM 15242 / JCM 11007 / NBRC 100824 / MB4) (Thermoanaerobacter tengcongensis).